The chain runs to 350 residues: Anthranilate phosphoribosyltransferase (350 aa).

5-phospho-alpha-D-ribose 1-diphosphate contacts are provided by residues Gly-94, 97–98, Thr-102, 104–107, 122–130, and Ser-134; these read GS, NVST, and KHGNRSVSS. Position 94 (Gly-94) interacts with anthranilate. Mg(2+) is bound at residue Ser-106. An anthranilate-binding site is contributed by Asn-125. Anthranilate is bound at residue Arg-180. Mg(2+) is bound by residues Asp-239 and Glu-240.

This sequence belongs to the anthranilate phosphoribosyltransferase family. As to quaternary structure, homodimer. It depends on Mg(2+) as a cofactor.

It catalyses the reaction N-(5-phospho-beta-D-ribosyl)anthranilate + diphosphate = 5-phospho-alpha-D-ribose 1-diphosphate + anthranilate. The protein operates within amino-acid biosynthesis; L-tryptophan biosynthesis; L-tryptophan from chorismate: step 2/5. Functionally, catalyzes the transfer of the phosphoribosyl group of 5-phosphorylribose-1-pyrophosphate (PRPP) to anthranilate to yield N-(5'-phosphoribosyl)-anthranilate (PRA). This is Anthranilate phosphoribosyltransferase from Geotalea uraniireducens (strain Rf4) (Geobacter uraniireducens).